Reading from the N-terminus, the 65-residue chain is Large ribosomal subunit protein bL35 (65 aa).

The protein belongs to the bacterial ribosomal protein bL35 family.

In Acetivibrio thermocellus (strain ATCC 27405 / DSM 1237 / JCM 9322 / NBRC 103400 / NCIMB 10682 / NRRL B-4536 / VPI 7372) (Clostridium thermocellum), this protein is Large ribosomal subunit protein bL35.